A 353-amino-acid chain; its full sequence is Protein disulfide isomerase CRELD2 (353 aa).

The N-terminal stretch at 1–24 is a signal peptide; it reads MRLPRRAALGLLPLLLLLPPAPEA. A CXXC motif is present at residues 31-34; sequence CHRC. 4 disulfides stabilise this stretch: Cys31–Cys34, Cys140–Cys154, Cys148–Cys166, and Cys168–Cys177. An EGF-like 1 domain is found at 136 to 178; sequence DCLACQGGSQRPCSGNGHCSGDGSRQGDGSCRCHMGYQGPLCT. An FU 1 repeat occupies 193–240; that stretch reads HSICTACDESCKTCSGLTNRDCGECEVGWVLDEGACVDVDECAAEPPP. N-linked (GlcNAc...) asparagine glycosylation occurs at Asn251. The FU 2 repeat unit spans residues 253–302; that stretch reads SYTCEECDSSCVGCTGEGPGNCKECISGYAREHGQCADVDECSLAEKTCV. The CXXC motif lies at 263-266; it reads CVGC. 4 cysteine pairs are disulfide-bonded: Cys263-Cys266, Cys294-Cys308, Cys301-Cys317, and Cys319-Cys330. In terms of domain architecture, EGF-like 2; calcium-binding spans 290–331; sequence DVDECSLAEKTCVRKNENCYNTPGSYVCVCPDGFEETEDACV. Positions 332–353 are disordered; that stretch reads PPAEAEATEGESPTQLPSREDL. Over residues 342–353 the composition is skewed to polar residues; sequence ESPTQLPSREDL.

Belongs to the CRELD family. As to quaternary structure, interacts with CHRNA4. Component of a complex containing at least CRELD2, MANF, MATN3 and PDIA4. As to expression, ubiquitously expressed. Highly expressed in skeletal muscle, heart, liver, kidney and placenta.

Its subcellular location is the endoplasmic reticulum. The catalysed reaction is Catalyzes the rearrangement of -S-S- bonds in proteins.. Functionally, protein disulfide isomerase. Might play a role in the unfolded protein response. May regulate transport of alpha4-beta2 neuronal acetylcholine receptor. This Homo sapiens (Human) protein is Protein disulfide isomerase CRELD2 (CRELD2).